Here is a 92-residue protein sequence, read N- to C-terminus: Elongation factor 1-beta (92 aa).

Belongs to the EF-1-beta/EF-1-delta family.

Its function is as follows. Promotes the exchange of GDP for GTP in EF-1-alpha/GDP, thus allowing the regeneration of EF-1-alpha/GTP that could then be used to form the ternary complex EF-1-alpha/GTP/AAtRNA. This Pyrobaculum aerophilum (strain ATCC 51768 / DSM 7523 / JCM 9630 / CIP 104966 / NBRC 100827 / IM2) protein is Elongation factor 1-beta (ef1b).